The following is a 117-amino-acid chain: Large ribosomal subunit protein eL8 (117 aa).

Belongs to the eukaryotic ribosomal protein eL8 family. In terms of assembly, part of the 50S ribosomal subunit. Probably part of the RNase P complex.

It localises to the cytoplasm. Functionally, multifunctional RNA-binding protein that recognizes the K-turn motif in ribosomal RNA, the RNA component of RNase P, box H/ACA, box C/D and box C'/D' sRNAs. The polypeptide is Large ribosomal subunit protein eL8 (Methanocaldococcus jannaschii (strain ATCC 43067 / DSM 2661 / JAL-1 / JCM 10045 / NBRC 100440) (Methanococcus jannaschii)).